Reading from the N-terminus, the 360-residue chain is Phospho-N-acetylmuramoyl-pentapeptide-transferase (360 aa).

10 consecutive transmembrane segments (helical) span residues 27 to 47 (GALI…INSL), 71 to 91 (TPTM…LLWA), 93 to 113 (LSSI…SIGF), 134 to 154 (LGLE…NGQA), 168 to 188 (FIIN…VGAG), 199 to 219 (GLAI…AYLS), 239 to 259 (LAVV…FNAP), 262 to 282 (AIFM…TVAV), 288 to 308 (IVLV…IIQV), and 337 to 357 (QVVI…LSTL).

Belongs to the glycosyltransferase 4 family. MraY subfamily. Requires Mg(2+) as cofactor.

It is found in the cell inner membrane. It carries out the reaction UDP-N-acetyl-alpha-D-muramoyl-L-alanyl-gamma-D-glutamyl-meso-2,6-diaminopimeloyl-D-alanyl-D-alanine + di-trans,octa-cis-undecaprenyl phosphate = di-trans,octa-cis-undecaprenyl diphospho-N-acetyl-alpha-D-muramoyl-L-alanyl-D-glutamyl-meso-2,6-diaminopimeloyl-D-alanyl-D-alanine + UMP. It functions in the pathway cell wall biogenesis; peptidoglycan biosynthesis. Functionally, catalyzes the initial step of the lipid cycle reactions in the biosynthesis of the cell wall peptidoglycan: transfers peptidoglycan precursor phospho-MurNAc-pentapeptide from UDP-MurNAc-pentapeptide onto the lipid carrier undecaprenyl phosphate, yielding undecaprenyl-pyrophosphoryl-MurNAc-pentapeptide, known as lipid I. The polypeptide is Phospho-N-acetylmuramoyl-pentapeptide-transferase (Mesorhizobium japonicum (strain LMG 29417 / CECT 9101 / MAFF 303099) (Mesorhizobium loti (strain MAFF 303099))).